We begin with the raw amino-acid sequence, 928 residues long: MEGAGENAPESSSSAPGSEESARDPQVPPPEEESGDCARSLEAVPKKLCGYLSKFGGKGPIRGWKSRWFFYDERKCQLYYSRTAQDANPLDSIDLSSAVFDCKADAEEGIFEIKTPSRVITLKAATKQAMLYWLQQLQMKRWEFHNSPPAPPATPDAALAGNGPVLHLELGQEEAELEEFLCPVKTPPGLVGVAAALQPFPALQNISLKHLGTEIQNTMHNIRGNKQAQGTGHEPPGEDSPQSGEPQREEQPLASDASTPGREPEDSPKPAPKPSLTISFAQKAKRQNNTFPFFSEGITRNRTAQEKVAALEQQVLMLTKELKSQKELVKILHKALEAAQQEKRASSAYLAAAEDKDRLELVRHKVRQIAELGRRVEALEQERESLAHTASLREQQVQELQQHVQLLMDKNHAKQQVICKLSEKVTQDFTHPPDQSPLRPDAANRDFLSQQGKIEHLKDDMEAYRTQNCFLNSEIHQVTKIWRKVAEKEKALLTKCAYLQARNCQVESKYLAGLRRLQEALGDEASECSELLRQLVQEALQWEAGEASSDSIELSPISKYDEYGFLTVPDYEVEDLKLLAKIQALESRSHHLLGLEAVDRPLRERWAALGDLVPSAELKQLLRAGVPREHRPRVWRWLVHLRVQHLHTPGCYQELLSRGQAREHPAARQIELDLNRTFPNNKHFTCPTSSFPDKLRRVLLAFSWQNPTIGYCQGLNRLAAIALLVLEEEESAFWCLVAIVETIMPADYYCNTLTASQVDQRVLQDLLSEKLPRLMAHLGQHHVDLSLVTFNWFLVVFADSLISNILLRVWDAFLYEGTKVVFRYALAIFKYNEKEILRLQNGLEIYQYLRFFTKTISNSRKLMNIAFNDMNPFRMKQLRQLRMVHRERLEAELRELEQLKAEYLERRASRRRAVSEGCASEDEVEGEA.

Met-1 bears the N-acetylmethionine mark. The span at 1 to 19 (MEGAGENAPESSSSAPGSE) shows a compositional bias: low complexity. The segment at 1 to 39 (MEGAGENAPESSSSAPGSEESARDPQVPPPEEESGDCAR) is disordered. Residues 1–169 (MEGAGENAPE…AGNGPVLHLE (169 aa)) are interaction with CADH1. One can recognise a PH domain in the interval 45 to 142 (PKKLCGYLSK…WLQQLQMKRW (98 aa)). The tract at residues 225-275 (NKQAQGTGHEPPGEDSPQSGEPQREEQPLASDASTPGREPEDSPKPAPKPS) is disordered. The interval 295–433 (SEGITRNRTA…KVTQDFTHPP (139 aa)) is interaction with RAC1. Residues 298-416 (ITRNRTAQEK…LMDKNHAKQQ (119 aa)) adopt a coiled-coil conformation. The residue at position 436 (Ser-436) is a Phosphoserine. The Rab-GAP TBC domain occupies 625–817 (GVPREHRPRV…RVWDAFLYEG (193 aa)). Residues 875-913 (MKQLRQLRMVHRERLEAELRELEQLKAEYLERRASRRRA) are a coiled coil. 2 positions are modified to phosphoserine: Ser-915 and Ser-920.

In terms of assembly, interacts with activated RAC1 and CDH1. As to expression, expressed in a broad range of tissues, especially in kidney, liver, lung and placenta. Also expressed in keratinocytes and epithelia-containing organs. Isoform 2 is differentially expressed in prostate normal and cancer cells (at protein level).

The protein resides in the cytoplasm. The protein localises to the cytoplasmic vesicle. It is found in the cell junction. Functionally, acts as a GTPase-activating protein for RAB7A. Signal effector acting as a linker between RAC1 and RAB7A, leading to RAB7A inactivation and subsequent inhibition of cadherin degradation and reduced cell-cell adhesion. This Homo sapiens (Human) protein is TBC1 domain family member 2A (TBC1D2).